The sequence spans 345 residues: uncharacterized protein (345 aa).

PDZ GRASP-type domains are found at residues 27–112 and 118–207; these read CGFR…WASI and AIWH…HGVL. The GRASP stretch occupies residues 27–223; that stretch reads CGFRVLKVEN…LSGPPPQPGD (197 aa). The tract at residues 229 to 345 is disordered; sequence PMLGGPDHKV…APQNEELVKN (117 aa). The segment covering 297 to 308 has biased composition (basic and acidic residues); that stretch reads KLSRELDHKTKD. 2 stretches are compositionally biased toward polar residues: residues 309 to 318 and 328 to 338; these read ASSTNDSQTT and VNSTNDESAPQ.

The protein localises to the golgi apparatus membrane. This is an uncharacterized protein from Schizosaccharomyces pombe (strain 972 / ATCC 24843) (Fission yeast).